The following is a 751-amino-acid chain: Ribosomal RNA large subunit methyltransferase K/L (751 aa).

In terms of domain architecture, THUMP spans 44 to 155 (LAYRTCLWSR…KNKLVLSIDL (112 aa)).

Belongs to the methyltransferase superfamily. RlmKL family.

It localises to the cytoplasm. The catalysed reaction is guanosine(2445) in 23S rRNA + S-adenosyl-L-methionine = N(2)-methylguanosine(2445) in 23S rRNA + S-adenosyl-L-homocysteine + H(+). It carries out the reaction guanosine(2069) in 23S rRNA + S-adenosyl-L-methionine = N(2)-methylguanosine(2069) in 23S rRNA + S-adenosyl-L-homocysteine + H(+). In terms of biological role, specifically methylates the guanine in position 2445 (m2G2445) and the guanine in position 2069 (m7G2069) of 23S rRNA. The polypeptide is Ribosomal RNA large subunit methyltransferase K/L (Cellvibrio japonicus (strain Ueda107) (Pseudomonas fluorescens subsp. cellulosa)).